We begin with the raw amino-acid sequence, 546 residues long: Glucose-6-phosphate isomerase (546 aa).

The Proton donor role is filled by glutamate 353. Residues histidine 384 and lysine 512 contribute to the active site.

The protein belongs to the GPI family.

It localises to the cytoplasm. It catalyses the reaction alpha-D-glucose 6-phosphate = beta-D-fructose 6-phosphate. The protein operates within carbohydrate biosynthesis; gluconeogenesis. Its pathway is carbohydrate degradation; glycolysis; D-glyceraldehyde 3-phosphate and glycerone phosphate from D-glucose: step 2/4. In terms of biological role, catalyzes the reversible isomerization of glucose-6-phosphate to fructose-6-phosphate. In Actinobacillus pleuropneumoniae serotype 3 (strain JL03), this protein is Glucose-6-phosphate isomerase.